Reading from the N-terminus, the 318-residue chain is Ribose-phosphate pyrophosphokinase (318 aa).

ATP is bound by residues 43-45 (DGE) and 102-103 (RQ). Residues His-136 and Asp-176 each contribute to the Mg(2+) site. Lys-199 is a catalytic residue. D-ribose 5-phosphate contacts are provided by residues Arg-201, Asp-225, and 229-233 (DTAGT).

This sequence belongs to the ribose-phosphate pyrophosphokinase family. Class I subfamily. In terms of assembly, homohexamer. Mg(2+) is required as a cofactor.

It is found in the cytoplasm. The enzyme catalyses D-ribose 5-phosphate + ATP = 5-phospho-alpha-D-ribose 1-diphosphate + AMP + H(+). It participates in metabolic intermediate biosynthesis; 5-phospho-alpha-D-ribose 1-diphosphate biosynthesis; 5-phospho-alpha-D-ribose 1-diphosphate from D-ribose 5-phosphate (route I): step 1/1. Involved in the biosynthesis of the central metabolite phospho-alpha-D-ribosyl-1-pyrophosphate (PRPP) via the transfer of pyrophosphoryl group from ATP to 1-hydroxyl of ribose-5-phosphate (Rib-5-P). This Listeria ivanovii protein is Ribose-phosphate pyrophosphokinase.